Here is a 193-residue protein sequence, read N- to C-terminus: Putative manganese efflux pump MntP (193 aa).

6 helical membrane-spanning segments follow: residues 6–26 (VVFVALALSADCFAVSIGIAC), 39–59 (VAGTFGLFQAGMAVIGYYAGL), 61–81 (IADVISSFDHWVAFGLLTVIG), 106–126 (LGLLGVAIATSIDALAVGLTF), 132–152 (NIGLAALLVGAVSLAVSYLGF), and 165–185 (WVGIAGGLILCLIGLKILAEH).

This sequence belongs to the MntP (TC 9.B.29) family.

The protein localises to the cell membrane. In terms of biological role, probably functions as a manganese efflux pump. This is Putative manganese efflux pump MntP from Dehalococcoides mccartyi (strain ATCC BAA-2266 / KCTC 15142 / 195) (Dehalococcoides ethenogenes (strain 195)).